Consider the following 195-residue polypeptide: ATP-dependent Clp protease proteolytic subunit 3 (195 aa).

Ser97 functions as the Nucleophile in the catalytic mechanism. The active site involves His122.

It belongs to the peptidase S14 family. As to quaternary structure, fourteen ClpP subunits assemble into 2 heptameric rings which stack back to back to give a disk-like structure with a central cavity, resembling the structure of eukaryotic proteasomes.

It localises to the cytoplasm. The enzyme catalyses Hydrolysis of proteins to small peptides in the presence of ATP and magnesium. alpha-casein is the usual test substrate. In the absence of ATP, only oligopeptides shorter than five residues are hydrolyzed (such as succinyl-Leu-Tyr-|-NHMec, and Leu-Tyr-Leu-|-Tyr-Trp, in which cleavage of the -Tyr-|-Leu- and -Tyr-|-Trp bonds also occurs).. Its function is as follows. Cleaves peptides in various proteins in a process that requires ATP hydrolysis. Has a chymotrypsin-like activity. Plays a major role in the degradation of misfolded proteins. The sequence is that of ATP-dependent Clp protease proteolytic subunit 3 from Rhizobium meliloti (strain 1021) (Ensifer meliloti).